The sequence spans 187 residues: Endoribonuclease YbeY (187 aa).

Positions 151, 155, and 161 each coordinate Zn(2+).

This sequence belongs to the endoribonuclease YbeY family. Zn(2+) is required as a cofactor.

It is found in the cytoplasm. Single strand-specific metallo-endoribonuclease involved in late-stage 70S ribosome quality control and in maturation of the 3' terminus of the 16S rRNA. In Prochlorococcus marinus (strain MIT 9313), this protein is Endoribonuclease YbeY.